Here is a 492-residue protein sequence, read N- to C-terminus: DEAD-box ATP-dependent RNA helicase RhpA (492 aa).

A Q motif motif is present at residues 20-48 (PSFNDLGLKESVLKSVYEAGFTSPSPIQE). The Helicase ATP-binding domain maps to 51–220 (IPAVLQGRDV…DKILENPIKI (170 aa)). Position 64–71 (64–71 (AQTGTGKT)) interacts with ATP. The short motif at 168 to 171 (DESD) is the DEAD box element. One can recognise a Helicase C-terminal domain in the interval 231-393 (DITQRFYVIN…EIPTINENQI (163 aa)). Residues 445 to 492 (AIQNPKEKTPKPSNKKTPQHERARSFKKGQHRDRHPKTNHYSKKPKRR) form a disordered region. Basic residues predominate over residues 469-492 (SFKKGQHRDRHPKTNHYSKKPKRR).

It belongs to the DEAD box helicase family. In terms of assembly, homodimer. Interacts with RNase J (rnj), might be a member of a minimal RNA degradosome complex.

It localises to the cytoplasm. The enzyme catalyses ATP + H2O = ADP + phosphate + H(+). Its function is as follows. DEAD-box RNA helicase probably involved in RNA degradation. Unwinds dsRNA in both 5'- and 3'-directions. This Helicobacter pylori (strain ATCC 700392 / 26695) (Campylobacter pylori) protein is DEAD-box ATP-dependent RNA helicase RhpA (rhpA).